A 582-amino-acid chain; its full sequence is Arginine--tRNA ligase (582 aa).

The short motif at 136–146 (ANPTGPMHMGH) is the 'HIGH' region element.

This sequence belongs to the class-I aminoacyl-tRNA synthetase family. Monomer.

The protein resides in the cytoplasm. It carries out the reaction tRNA(Arg) + L-arginine + ATP = L-arginyl-tRNA(Arg) + AMP + diphosphate. The protein is Arginine--tRNA ligase of Novosphingobium aromaticivorans (strain ATCC 700278 / DSM 12444 / CCUG 56034 / CIP 105152 / NBRC 16084 / F199).